A 239-amino-acid chain; its full sequence is Ubiquinone biosynthesis O-methyltransferase (239 aa).

S-adenosyl-L-methionine-binding residues include Arg44, Gly63, Asp84, and Met128.

Belongs to the methyltransferase superfamily. UbiG/COQ3 family.

The catalysed reaction is a 3-demethylubiquinol + S-adenosyl-L-methionine = a ubiquinol + S-adenosyl-L-homocysteine + H(+). It catalyses the reaction a 3-(all-trans-polyprenyl)benzene-1,2-diol + S-adenosyl-L-methionine = a 2-methoxy-6-(all-trans-polyprenyl)phenol + S-adenosyl-L-homocysteine + H(+). It participates in cofactor biosynthesis; ubiquinone biosynthesis. Its function is as follows. O-methyltransferase that catalyzes the 2 O-methylation steps in the ubiquinone biosynthetic pathway. The sequence is that of Ubiquinone biosynthesis O-methyltransferase from Xanthomonas campestris pv. campestris (strain 8004).